The primary structure comprises 68 residues: Antimicrobial peptide VpCT3 (68 aa).

Residues 1–23 (MKTQIVILIVAVLVLQLVSQSDA) form the signal peptide. At Leu-36 the chain carries Leucine amide. The propeptide occupies 37–68 (GKRGLKNLDQYNDLFDGEISDADIKFLQDLMR).

Belongs to the non-disulfide-bridged peptide (NDBP) superfamily. Short antimicrobial peptide (group 4) family. As to expression, expressed by the venom gland.

It is found in the secreted. The protein resides in the target cell membrane. Its function is as follows. Antimicrobial peptide with weak activity against all bacteria tested (MIC&gt;100 uM) and all yeasts tested (MIC&gt;200 uM). Also provokes weak hemolysis on human erythrocytes (HC(50)=83.7 uM). The protein is Antimicrobial peptide VpCT3 of Mesomexovis punctatus (Scorpion).